Consider the following 204-residue polypeptide: Nascent polypeptide-associated complex subunit alpha (204 aa).

The span at 1–19 (MADPRVEELPDEEVPKTNV) shows a compositional bias: basic and acidic residues. Disordered regions lie at residues 1–48 (MADP…HSRN) and 119–167 (LAAA…GLEA). Positions 22-32 (AGSDSESEAGE) are enriched in acidic residues. An NAC-A/B domain is found at 46–111 (SRNEKKARKA…AKIEDLNSQA (66 aa)). The segment covering 119-128 (LAAAEAAAGE) has biased composition (low complexity). The segment covering 129–151 (HAGHDHDHDHGKGKAPETEAKKE) has biased composition (basic and acidic residues). A compositionally biased stretch (acidic residues) spans 152-164 (EEEDDGEEVDETG). Residues 165 to 204 (LEAKDIELVMAQANVSRKKAVKALRENDNDIVNSIMALSI) enclose the UBA domain.

Belongs to the NAC-alpha family. Part of the nascent polypeptide-associated complex (NAC), consisting of egd2 and egd1. NAC associates with ribosomes via egd1.

Its subcellular location is the cytoplasm. The protein resides in the nucleus. In terms of biological role, component of the nascent polypeptide-associated complex (NAC), a dynamic component of the ribosomal exit tunnel, protecting the emerging polypeptides from interaction with other cytoplasmic proteins to ensure appropriate nascent protein targeting. The NAC complex also promotes mitochondrial protein import by enhancing productive ribosome interactions with the outer mitochondrial membrane and blocks the inappropriate interaction of ribosomes translating non-secretory nascent polypeptides with translocation sites in the membrane of the endoplasmic reticulum. Egd2 may also be involved in transcription regulation. In Aspergillus clavatus (strain ATCC 1007 / CBS 513.65 / DSM 816 / NCTC 3887 / NRRL 1 / QM 1276 / 107), this protein is Nascent polypeptide-associated complex subunit alpha (egd2).